The sequence spans 410 residues: Proteasomal ubiquitin receptor ADRM1 (410 aa).

The Pru domain maps to 17-130 (SSSKYLVEFR…RKVNEYLNNP (114 aa)). Serine 18 bears the Phosphoserine mark. Residues 191 to 257 (GSGGPATSSS…PAAQTPSLPA (67 aa)) show a composition bias toward low complexity. Disordered regions lie at residues 191-264 (GSGG…SSTQ) and 381-410 (FAKAMEGSDSKTDDGDSKDKKDDDEDMSLD). The DEUBAD domain occupies 281–395 (PAMPTEGSGV…EGSDSKTDDG (115 aa)). The span at 381–401 (FAKAMEGSDSKTDDGDSKDKK) shows a compositional bias: basic and acidic residues.

It belongs to the ADRM1 family. In terms of assembly, component of the 19S proteasome regulatory particle complex. The 26S proteasome consists of a 20S core particle (CP) and two 19S regulatory subunits (RP).

Its subcellular location is the cytoplasm. It localises to the nucleus. Functionally, component of the 26S proteasome, a multiprotein complex involved in the ATP-dependent degradation of ubiquitinated proteins. This complex plays a key role in the maintenance of protein homeostasis by removing misfolded or damaged proteins, which could impair cellular functions, and by removing proteins whose functions are no longer required. Therefore, the proteasome participates in numerous cellular processes, including cell cycle progression, apoptosis, or DNA damage repair. Within the complex, functions as a proteasomal ubiquitin receptor. The sequence is that of Proteasomal ubiquitin receptor ADRM1 (adrm1b) from Danio rerio (Zebrafish).